The chain runs to 531 residues: HERV-H LTR-associating protein 1 (531 aa).

A signal peptide spans 1 to 29 (MLGFLSRGPSMKLCMGLACVLSLWNTVSG). N-linked (GlcNAc...) asparagine glycans are attached at residues Asn-79, Asn-143, and Asn-161. Disordered regions lie at residues 231 to 289 (GTAR…RPPE) and 340 to 362 (EKKP…GTEE). Polar residues-rich tracts occupy residues 232 to 269 (TART…SSPW) and 349 to 362 (ETRS…GTEE).

It is found in the secreted. This is HERV-H LTR-associating protein 1 (HHLA1) from Homo sapiens (Human).